A 242-amino-acid chain; its full sequence is 7-cyano-7-deazaguanine synthase (242 aa).

13 to 23 contributes to the ATP binding site; it reads FSGGQDSSVCL. Zn(2+)-binding residues include C201, C216, C219, and C222.

Belongs to the QueC family. It depends on Zn(2+) as a cofactor.

The enzyme catalyses 7-carboxy-7-deazaguanine + NH4(+) + ATP = 7-cyano-7-deazaguanine + ADP + phosphate + H2O + H(+). Its pathway is purine metabolism; 7-cyano-7-deazaguanine biosynthesis. Catalyzes the ATP-dependent conversion of 7-carboxy-7-deazaguanine (CDG) to 7-cyano-7-deazaguanine (preQ(0)). This chain is 7-cyano-7-deazaguanine synthase, found in Caulobacter vibrioides (strain ATCC 19089 / CIP 103742 / CB 15) (Caulobacter crescentus).